The sequence spans 552 residues: Iduronate 2-sulfatase (552 aa).

The first 29 residues, 1–29, serve as a signal peptide directing secretion; that stretch reads MSPPPPPPIWRQLSFSLLLGSFCIALESA. Residues 30–35 constitute a propeptide that is removed on maturation; it reads AQGNSA. D47, D48, and C86 together coordinate Ca(2+). C86 serves as the catalytic Nucleophile. C86 bears the 3-oxoalanine (Cys) mark. N-linked (GlcNAc...) asparagine glycosylation occurs at N117. H140 is a catalytic residue. N146 carries N-linked (GlcNAc...) asparagine glycosylation. Residues C173 and C186 are joined by a disulfide bond. N-linked (GlcNAc...) asparagine glycosylation is found at N248 and N282. Ca(2+) is bound by residues D336 and H337. C424 and C434 are oxidised to a cystine. N-linked (GlcNAc...) asparagine glycosylation is found at N515 and N539.

It belongs to the sulfatase family. Monomer. The 58-kDa mature form is composed of two chains resulting from proteolitic processing, the 42-kDa chain and the 14-kDa chain that remain stably associated and form the 58-kDa intermediate form which is enzymatically active. Requires Ca(2+) as cofactor. Synthesized as a 75-kDa precursor form in the endoplasmic reticulum (ER), and then processed by proteolytic cleavage through various intermediates to yield a 55-kDa mature form, with the release of an 18 kDa polypeptide. Post-translationally, the conversion to 3-oxoalanine (also known as C-formylglycine, FGly), of a serine or cysteine residue in prokaryotes and of a cysteine residue in eukaryotes, is critical for catalytic activity. As to expression, found to be expressed in alpha and beta pancreatic cells.

The protein localises to the lysosome. The catalysed reaction is Hydrolysis of the 2-sulfate groups of the L-iduronate 2-sulfate units of dermatan sulfate, heparan sulfate and heparin.. Lysosomal enzyme involved in the degradation pathway of dermatan sulfate and heparan sulfate. In Mus musculus (Mouse), this protein is Iduronate 2-sulfatase (Ids).